We begin with the raw amino-acid sequence, 538 residues long: Cytochrome P450 monooxygenase fogE (538 aa).

Residues 4–24 (ASSAILLVALIAALWRLSLIG) form a helical membrane-spanning segment. Heme is bound at residue C437.

The protein belongs to the cytochrome P450 family. Requires heme as cofactor.

The protein resides in the membrane. It functions in the pathway secondary metabolite biosynthesis. In terms of biological role, cytochrome P450 monooxygenase; part of the gene cluster that mediates the biosynthesis of flavoglaucin and congeners (including aspergin, dihydroauroglaucin and auroglaucin), prenylated salicylaldehyde derivatives carrying a saturated or an unsaturated C-7 side chain. The PKS fogA releases the carboxylic acid (8E,10E,12E)-3,5,7-trihydroxytetradeca-8,10,12-trienoic acid as its product, as well as derivatives with one and two double bonds. FogA is indeed able to reduce the initial triketide, thus being at least partially responsible for the differently saturated heptyl side chains of flavoglaucin congeners. The oxidoreductases fogB, fogC and fogD modify the nascent polyketide in fogA-bound form and, together, fogA, fogB, fogC and fogD are necessary for the formation of the aromatic core and the cyclized PKS products are released as salicyl alcohols. In particular, fogB is responsible for oxidation of a hydroxyl group or reduction of remaining double bond(s) at the C-7 residue whereas fogD is probably involved in the reductive release of the modified PKS products. The cytochrome P450 monooxygenase fogE is then responsible for the hydroxylation at C-3 of the benzene ring. The fogE products are substrates of the prenyltransferase fogH and the prenylated benzyl alcohols are subsequently oxidized by the fogF to produce the final aryl aldehydes flavoglaucin and congeners. The short-chain dehydrogenase fogG does not seem to be involved in the biosynthesis of the prenylated salicylaldehyde derivatives. This Aspergillus ruber (strain CBS 135680) protein is Cytochrome P450 monooxygenase fogE.